The chain runs to 297 residues: MSKRKLSGSAVALVTPFRQDMSVDREAIRRLVHFHIAAGTDILIPCGTTGESPTLTADEQTEIIEIVREEAGNKMLVAAGAGTNATEEAVSLASNAQKAGAQALLSVAPYYNKPSQEGYYQHYRRIAEAVSIPVIVYNVPGRTGSNVHAETILRLAHDCENIAAVKEASDNMAQIMELLASRPDDFSVMTGEDSLILPFMALGGDGVISVAANLLPAEVKQLVTEMHEGDLEKARVIHNRLRRLFSLNFIESNPVPVKYSLSLMGMIEEVYRLPLVALQPENKEKIKEELRNLGLVS.

Pyruvate is bound at residue T49. Catalysis depends on Y137, which acts as the Proton donor/acceptor. K166 functions as the Schiff-base intermediate with substrate in the catalytic mechanism. A pyruvate-binding site is contributed by I208.

This sequence belongs to the DapA family. Homotetramer; dimer of dimers.

The protein resides in the cytoplasm. It catalyses the reaction L-aspartate 4-semialdehyde + pyruvate = (2S,4S)-4-hydroxy-2,3,4,5-tetrahydrodipicolinate + H2O + H(+). The protein operates within amino-acid biosynthesis; L-lysine biosynthesis via DAP pathway; (S)-tetrahydrodipicolinate from L-aspartate: step 3/4. In terms of biological role, catalyzes the condensation of (S)-aspartate-beta-semialdehyde [(S)-ASA] and pyruvate to 4-hydroxy-tetrahydrodipicolinate (HTPA). This Chlorobium phaeobacteroides (strain BS1) protein is 4-hydroxy-tetrahydrodipicolinate synthase.